Here is a 155-residue protein sequence, read N- to C-terminus: FUN14 domain-containing protein 1 (155 aa).

The Cytoplasmic portion of the chain corresponds to 1 to 47; that stretch reads MATRNPPPQEYESDDDSYEVLDLTEYARRHHWWNRVFGHSSGPMVEK. Phosphoserine is present on residues Ser-13 and Ser-17. Tyr-18 is subject to Phosphotyrosine; by SRC. Positions 18–21 match the YXXL motif; that stretch reads YEVL. A helical membrane pass occupies residues 48-68; it reads YSVATQIVMGGVSGWCAGFLF. At 69-74 the chain is on the mitochondrial intermembrane side; the sequence is QKVGKL. The chain crosses the membrane as a helical span at residues 75–95; it reads AATAVGGGFLLLQIASHSGYV. At 96–133 the chain is on the cytoplasmic side; sequence QIDWKRVEKDVNKAKRQIKKRANKAAPEINNIIEEATE. A Glycyl lysine isopeptide (Lys-Gly) (interchain with G-Cter in ubiquitin) cross-link involves residue Lys-119. The chain crosses the membrane as a helical span at residues 134–154; sequence FVKQNIVISSGFVGGFLLGLA. Ser-155 is a topological domain (mitochondrial intermembrane).

This sequence belongs to the FUN14 family. As to quaternary structure, interacts (via YXXL motif) with MAP1 LC3 family proteins MAP1LC3A, MAP1LC3B and GABARAP. Interacts with DNM1L/DPR1. Interacts with GPX4. Phosphorylation at Ser-13 by CK2 and at Tyr-18 by SRC inhibits activation of mitophagy. Following hypoxia, dephosphorylated at Tyr-18, leading to interaction with MAP1 LC3 family proteins and triggering mitophagy. Dephosphorylation is mediated by PGAM5. Phosphorylated by ULK1 at Ser-17 which enhances FUNDC1 binding to LC3. In terms of processing, ubiquitinated on Lys-119. Deubiquitinated by USP19; leading to hypoxia-induced DRP1 oligomerization and GTPase activity.

The protein resides in the mitochondrion outer membrane. Integral mitochondrial outer-membrane protein that mediates the formation of mitochondria-associated endoplasmic reticulum membranes (MAMs). In turn, mediates angiogenesis and neoangiogenesis through interference with intracellular Ca(2+) communication and regulation of the vascular endothelial growth factor receptor KDR/VEGFR2 expression at both mRNA and protein levels. Also acts as an activator of hypoxia-induced mitophagy, an important mechanism for mitochondrial quality and homeostasis, by interacting with and recruiting LC3 protein family to mitochondria. Mechanistically, recruits DRP1 at ER-mitochondria contact sites leading to DRP1 oligomerization and GTPase activity to facilitate mitochondrial fission during hypoxia. Additionally, plays a role in hepatic ferroptosis by interacting directly with glutathione peroxidase/GPX4 to facilitate its recruitment into mitochondria through TOM/TIM complex where it is degraded by mitophagy. The sequence is that of FUN14 domain-containing protein 1 (FUNDC1) from Bos taurus (Bovine).